We begin with the raw amino-acid sequence, 466 residues long: Asparagine--tRNA ligase (466 aa).

Belongs to the class-II aminoacyl-tRNA synthetase family. As to quaternary structure, homodimer.

The protein resides in the cytoplasm. The enzyme catalyses tRNA(Asn) + L-asparagine + ATP = L-asparaginyl-tRNA(Asn) + AMP + diphosphate + H(+). In Shewanella sp. (strain MR-4), this protein is Asparagine--tRNA ligase.